The sequence spans 401 residues: Histone acetyltransferase type B subunit 2 (401 aa).

WD repeat units lie at residues 116-147 (EHEE…FLYS), 158-189 (FHKD…ALWE), 206-237 (LHSD…KIND), 249-280 (KCPQ…YLYD), and 293-324 (GHED…MMWD). Residues 335–339 (DDAED) are interaction with the histone H4 N-terminus. The WD 6 repeat unit spans residues 350–381 (GHRSSVNDFDLNPQIPWLVASAEEENILQVWK).

Belongs to the WD repeat RBAP46/RBAP48/MSI1 family. Component of the HAT-B complex composed of at least HAT1 and HAT2. In the cytoplasm, this complex binds to the histone H4 tail. In the nucleus, the HAT-B complex has an additional component, the histone H3/H4 chaperone HIF1.

The protein localises to the cytoplasm. It localises to the nucleus. Regulatory subunit of the histone acetylase B (HAT-B) complex. The complex acetylates 'Lys-12' of histone H4 which is required for telomeric silencing. HAT2 is required for high affinity binding of the acetyltransferase to histone H4, for the nuclear location of HAT1 and for the HAT1-HIF1 interaction. Alone, it is unable to bind to H4, requiring HAT1 for high affinity interaction with the histone tail. HAT2 also has a HAT1 independent function in life-span regulation. In Saccharomyces cerevisiae (strain ATCC 204508 / S288c) (Baker's yeast), this protein is Histone acetyltransferase type B subunit 2 (HAT2).